The sequence spans 264 residues: Thymidylate synthase (264 aa).

A dUMP-binding site is contributed by Arg-21. His-51 contacts (6R)-5,10-methylene-5,6,7,8-tetrahydrofolate. Residue 126–127 participates in dUMP binding; the sequence is RR. Cys-146 functions as the Nucleophile in the catalytic mechanism. Residues 166 to 169, Asn-177, and 207 to 209 each bind dUMP; these read RSAD and HLY. Asp-169 is a (6R)-5,10-methylene-5,6,7,8-tetrahydrofolate binding site. Residue Ala-263 participates in (6R)-5,10-methylene-5,6,7,8-tetrahydrofolate binding.

It belongs to the thymidylate synthase family. Bacterial-type ThyA subfamily. In terms of assembly, homodimer.

It localises to the cytoplasm. The catalysed reaction is dUMP + (6R)-5,10-methylene-5,6,7,8-tetrahydrofolate = 7,8-dihydrofolate + dTMP. Its pathway is pyrimidine metabolism; dTTP biosynthesis. In terms of biological role, catalyzes the reductive methylation of 2'-deoxyuridine-5'-monophosphate (dUMP) to 2'-deoxythymidine-5'-monophosphate (dTMP) while utilizing 5,10-methylenetetrahydrofolate (mTHF) as the methyl donor and reductant in the reaction, yielding dihydrofolate (DHF) as a by-product. This enzymatic reaction provides an intracellular de novo source of dTMP, an essential precursor for DNA biosynthesis. This chain is Thymidylate synthase, found in Cytophaga hutchinsonii (strain ATCC 33406 / DSM 1761 / CIP 103989 / NBRC 15051 / NCIMB 9469 / D465).